A 196-amino-acid chain; its full sequence is ATP-dependent Clp protease proteolytic subunit (196 aa).

Ser-98 serves as the catalytic Nucleophile. His-123 is an active-site residue.

It belongs to the peptidase S14 family. As to quaternary structure, fourteen ClpP subunits assemble into 2 heptameric rings which stack back to back to give a disk-like structure with a central cavity, resembling the structure of eukaryotic proteasomes.

The protein localises to the cytoplasm. The enzyme catalyses Hydrolysis of proteins to small peptides in the presence of ATP and magnesium. alpha-casein is the usual test substrate. In the absence of ATP, only oligopeptides shorter than five residues are hydrolyzed (such as succinyl-Leu-Tyr-|-NHMec, and Leu-Tyr-Leu-|-Tyr-Trp, in which cleavage of the -Tyr-|-Leu- and -Tyr-|-Trp bonds also occurs).. Functionally, cleaves peptides in various proteins in a process that requires ATP hydrolysis. Has a chymotrypsin-like activity. Plays a major role in the degradation of misfolded proteins. This Actinobacillus pleuropneumoniae serotype 5b (strain L20) protein is ATP-dependent Clp protease proteolytic subunit.